A 627-amino-acid chain; its full sequence is Coiled-coil domain-containing protein 22 (627 aa).

A sufficient for interaction with COMMD1 region spans residues 1–321 (MEEADRILIH…VADVPATSQR (321 aa)). The sufficicient and required for interaction with CCDC93 stretch occupies residues 1–447 (MEEADRILIH…LQDCRELESS (447 aa)). S410 is subject to Phosphoserine. Residues 448 to 535 (RRLAEIQELH…NSLSGKLDRT (88 aa)) adopt a coiled-coil conformation.

It belongs to the CCDC22 family. As to quaternary structure, component of the commander complex consisting of the CCC subcomplex and the retriever subcomplex. Component of the CCC (COMMD/CCDC22/CCDC93) subcomplex consisting of COMMD1, COMMD2, COMMD3, COMMD4, COMMD5, COMMD6, COMMD7, COMMD8, COMMD9, COMMD10, CCDC22 and CCDC93. Forms a coiled-coil heterodimer with CCDC22; this heterodimer interacts with the guanine nucleotide exchange factor DENND10; the interaction is direct. Interacts with CUL1, CUL2, CUL3, SKP1, BTRC. Interacts with SNX17 and SNX31. Interacts with CPNE1 and CPNE4.

It localises to the endosome. The protein resides in the cytoplasm. It is found in the cytoskeleton. The protein localises to the microtubule organizing center. Its subcellular location is the centrosome. In terms of biological role, component of the commander complex that is essential for endosomal recycling of transmembrane cargos; the Commander complex is composed of composed of the CCC subcomplex and the retriever subcomplex. Component of the CCC complex, which is involved in the regulation of endosomal recycling of surface proteins, including integrins, signaling receptor and channels. Involved in regulation of NF-kappa-B signaling. Promotes ubiquitination of I-kappa-B-kinase subunit IKBKB and its subsequent proteasomal degradation leading to NF-kappa-B activation; the function may involve association with COMMD8 and a CUL1-dependent E3 ubiquitin ligase complex. May down-regulate NF-kappa-B activity via association with COMMD1 and involving a CUL2-dependent E3 ubiquitin ligase complex. Regulates the cellular localization of COMM domain-containing proteins, such as COMMD1 and COMMD10. Component of the CCC complex, which is involved in the regulation of endosomal recycling of surface proteins, including integrins, signaling receptor and channels. The CCC complex associates with SNX17, retriever and WASH complexes to prevent lysosomal degradation and promote cell surface recycling of numerous cargos such as integrins ITGA5:ITGB1. Plays a role in copper ion homeostasis. Involved in copper-dependent ATP7A trafficking between the trans-Golgi network and vesicles in the cell periphery; the function is proposed to depend on its association within the CCC complex and cooperation with the WASH complex on early endosomes. The chain is Coiled-coil domain-containing protein 22 (Ccdc22) from Mus musculus (Mouse).